The sequence spans 213 residues: ATP synthase peripheral stalk subunit OSCP, mitochondrial (213 aa).

A mitochondrion-targeting transit peptide spans 1-23 (MAAPAVSGLSRQVRCFSTSVVRP). An SIFI-degron motif is present at residues 5-23 (AVSGLSRQVRCFSTSVVRP). Lysine 54, lysine 60, lysine 70, and lysine 73 each carry N6-acetyllysine. Lysine 90 carries the N6-succinyllysine modification. An N6-acetyllysine; alternate mark is found at lysine 158 and lysine 162. N6-succinyllysine; alternate occurs at positions 158 and 162. Lysine 172, lysine 176, and lysine 192 each carry N6-acetyllysine. Lysine 199 is modified (N6-succinyllysine).

Belongs to the ATPase delta chain family. In terms of assembly, component of the ATP synthase complex composed at least of ATP5F1A/subunit alpha, ATP5F1B/subunit beta, ATP5MC1/subunit c (homooctomer), MT-ATP6/subunit a, MT-ATP8/subunit 8, ATP5ME/subunit e, ATP5MF/subunit f, ATP5MG/subunit g, ATP5MK/subunit k, ATP5MJ/subunit j, ATP5F1C/subunit gamma, ATP5F1D/subunit delta, ATP5F1E/subunit epsilon, ATP5PF/subunit F6, ATP5PB/subunit b, ATP5PD/subunit d, ATP5PO/subunit OSCP. ATP synthase complex consists of a soluble F(1) head domain (subunits alpha(3) and beta(3)) - the catalytic core - and a membrane F(0) domain - the membrane proton channel (subunits c, a, 8, e, f, g, k and j). These two domains are linked by a central stalk (subunits gamma, delta, and epsilon) rotating inside the F1 region and a stationary peripheral stalk (subunits F6, b, d, and OSCP). Post-translationally, acetylation at Lys-162 decreases ATP production. Deacetylated by SIRT3. In response to mitochondrial stress, the precursor protein is ubiquitinated by the SIFI complex in the cytoplasm before mitochondrial import, leading to its degradation. Within the SIFI complex, UBR4 initiates ubiquitin chain that are further elongated or branched by KCMF1.

It is found in the mitochondrion. Its subcellular location is the mitochondrion inner membrane. Subunit OSCP, of the mitochondrial membrane ATP synthase complex (F(1)F(0) ATP synthase or Complex V) that produces ATP from ADP in the presence of a proton gradient across the membrane which is generated by electron transport complexes of the respiratory chain. ATP synthase complex consist of a soluble F(1) head domain - the catalytic core - and a membrane F(1) domain - the membrane proton channel. These two domains are linked by a central stalk rotating inside the F(1) region and a stationary peripheral stalk. During catalysis, ATP synthesis in the catalytic domain of F(1) is coupled via a rotary mechanism of the central stalk subunits to proton translocation. In vivo, can only synthesize ATP although its ATP hydrolase activity can be activated artificially in vitro. Part of the complex F(0) domain. Part of the complex F(0) domain and the peripheric stalk, which acts as a stator to hold the catalytic alpha(3)beta(3) subcomplex and subunit a/ATP6 static relative to the rotary elements. The chain is ATP synthase peripheral stalk subunit OSCP, mitochondrial from Homo sapiens (Human).